We begin with the raw amino-acid sequence, 602 residues long: Elongation factor 4 (602 aa).

The tr-type G domain occupies 8–189 (KNIRNFSIIA…KIITTIPAPS (182 aa)). Residues 20–25 (DHGKST) and 136–139 (NKID) each bind GTP.

The protein belongs to the TRAFAC class translation factor GTPase superfamily. Classic translation factor GTPase family. LepA subfamily.

It is found in the cell inner membrane. It catalyses the reaction GTP + H2O = GDP + phosphate + H(+). Required for accurate and efficient protein synthesis under certain stress conditions. May act as a fidelity factor of the translation reaction, by catalyzing a one-codon backward translocation of tRNAs on improperly translocated ribosomes. Back-translocation proceeds from a post-translocation (POST) complex to a pre-translocation (PRE) complex, thus giving elongation factor G a second chance to translocate the tRNAs correctly. Binds to ribosomes in a GTP-dependent manner. The chain is Elongation factor 4 from Helicobacter pylori (strain HPAG1).